Here is a 104-residue protein sequence, read N- to C-terminus: UPF0145 protein VIBHAR_02090 (104 aa).

Belongs to the UPF0145 family.

This Vibrio campbellii (strain ATCC BAA-1116) protein is UPF0145 protein VIBHAR_02090.